Here is a 358-residue protein sequence, read N- to C-terminus: MPRTKRVYSGKTITGVLYPVAICMLFVAINVKLSQPEQQEQSKVVYGLFHSYDTADSGTITLYLIGFLILTTSLGVFCYQMKFYKAIKVYVLANSIGILLVYSVFHFQRIAEAQSIPVSVPTFFFLILQFGGLGITCLHWKSHRRLHQFYLIMLAGLTAIFILNILPDWTVWMALTAISFWDIVAVLTPCGPLKMLVETANRRGDDKFPAILYNSSSYVNEVDSPDTTRSNSTPLTEFNNSSSSRLLESDSLLRPPVIPRQIREVREVEGTIRLGMGDFVFYSLMLGNTVQTCPLPTVVACFVSNLVGLTITLPIVTLSQTALPALPFPLAIAAIFYFSSHIALTPFTDLCTSQLILI.

Over methionine 1 to threonine 12 the chain is Cytoplasmic. A helical membrane pass occupies residues isoleucine 13–leucine 33. The Lumenal portion of the chain corresponds to serine 34–serine 57. Residues glycine 58–cysteine 78 traverse the membrane as a helical segment. At tyrosine 79–alanine 86 the chain is on the cytoplasmic side. Residues isoleucine 87–phenylalanine 107 traverse the membrane as a helical segment. Residues glutamine 108–serine 115 are Lumenal-facing. The chain crosses the membrane as a helical span at residues isoleucine 116–threonine 136. The Cytoplasmic segment spans residues cysteine 137–glutamine 148. The helical transmembrane segment at phenylalanine 149–tryptophan 169 threads the bilayer. Position 170 (threonine 170) is a topological domain, lumenal. A helical transmembrane segment spans residues valine 171–glycine 191. Residue aspartate 182 is part of the active site. The Cytoplasmic portion of the chain corresponds to proline 192–arginine 273. A compositionally biased stretch (polar residues) spans glutamate 221–asparagine 240. A disordered region spans residues glutamate 221–serine 242. A helical membrane pass occupies residues leucine 274–proline 294. Aspartate 278 is a catalytic residue. The Lumenal segment spans residues leucine 295–threonine 297. A helical transmembrane segment spans residues valine 298–leucine 318. Topologically, residues serine 319–threonine 321 are cytoplasmic. An intramembrane region (helical) is located at residues alanine 322–isoleucine 342. Positions proline 324–leucine 326 match the PAL motif. At alanine 343 to isoleucine 358 the chain is on the cytoplasmic side.

It belongs to the peptidase A22A family. Homodimer. Component of the gamma-secretase complex, a complex probably composed of the presenilin homodimer (sel-12, hop-1 or spe-4), nicastrin (aph-2), aph-1 and pen-2. Weakly expressed.

It localises to the endoplasmic reticulum membrane. Its subcellular location is the golgi apparatus membrane. In terms of biological role, probable catalytic subunit of the gamma-secretase complex, an endoprotease complex that catalyzes the intramembrane cleavage of integral membrane proteins such as Notch receptors (lin-12 or glp-1). Probably works redundantly of lin-12, which provides more presenilin function. The sequence is that of Presenilin hop-1 (hop-1) from Caenorhabditis elegans.